Consider the following 235-residue polypeptide: Transcription factor MYB59 (235 aa).

2 HTH myb-type domains span residues 5-57 (QEEY…VNYL) and 58-112 (HPGL…RKKA). A DNA-binding region (H-T-H motif) is located at residues 33-57 (WDFVAKVSGLNRTGKSCRLRWVNYL). The short motif at 62 to 65 (KRGK) is the Bipartite nuclear localization signal 1 element. The segment at residues 85–108 (WSKIARKLPGRTDNEIKNYWRTHM) is a DNA-binding region (H-T-H motif). The short motif at 109–117 (RKKAQEKKR) is the Bipartite nuclear localization signal 2 element. A disordered region spans residues 109 to 147 (RKKAQEKKRPMSPTSSSSNCCSSSMTTTTSQDTGGSNGK). Low complexity predominate over residues 119–138 (MSPTSSSSNCCSSSMTTTTS).

In terms of tissue distribution, mainly expressed in leaves and seedlings, and to a lower extent, in roots, stems and inflorescences. Isoform MYB59-1 and isoform MYB59-2 are present in roots, leaves, and seedlings, while the expression of isoform MYB59-3 and isoform MYB59-4 is confined to seedlings.

The protein resides in the nucleus. Functionally, transcription factor. The protein is Transcription factor MYB59 (MYB59) of Arabidopsis thaliana (Mouse-ear cress).